Here is a 641-residue protein sequence, read N- to C-terminus: Mannosyl-oligosaccharide 1,2-alpha-mannosidase IB (641 aa).

Threonine 2 carries the post-translational modification N-acetylthreonine. Topologically, residues 2–36 (TTPALLPLSGRRIPPLNLGPPSFPHHRATLRLSEK) are cytoplasmic. A helical; Signal-anchor for type II membrane protein membrane pass occupies residues 37-57 (FILLLILSAFITLCFGAFFFL). At 58-641 (PDSSKHKRFD…TTLSGNPAVR (584 aa)) the chain is on the lumenal side. The interval 153 to 175 (NKPLPPVPIPNLVGIRGGDPEDN) is disordered. Cysteine 462 and cysteine 494 are oxidised to a cystine. The Proton donor role is filled by glutamate 508. Threonine 619 serves as a coordination point for Ca(2+). Residue asparagine 631 is glycosylated (N-linked (GlcNAc...) asparagine).

It belongs to the glycosyl hydrolase 47 family. It depends on Ca(2+) as a cofactor. As to expression, highest levels of expression in placenta and testis.

Its subcellular location is the golgi apparatus membrane. The enzyme catalyses N(4)-(alpha-D-Man-(1-&gt;2)-alpha-D-Man-(1-&gt;2)-alpha-D-Man-(1-&gt;3)-[alpha-D-Man-(1-&gt;2)-alpha-D-Man-(1-&gt;3)-[alpha-D-Man-(1-&gt;2)-alpha-D-Man-(1-&gt;6)]-alpha-D-Man-(1-&gt;6)]-beta-D-Man-(1-&gt;4)-beta-D-GlcNAc-(1-&gt;4)-beta-D-GlcNAc)-L-asparaginyl-[protein] (N-glucan mannose isomer 9A1,2,3B1,2,3) + 4 H2O = N(4)-(alpha-D-Man-(1-&gt;3)-[alpha-D-Man-(1-&gt;3)-[alpha-D-Man-(1-&gt;6)]-alpha-D-Man-(1-&gt;6)]-beta-D-Man-(1-&gt;4)-beta-D-GlcNAc-(1-&gt;4)-beta-D-GlcNAc)-L-asparaginyl-[protein] (N-glucan mannose isomer 5A1,2) + 4 beta-D-mannose. The catalysed reaction is N(4)-(alpha-D-Man-(1-&gt;2)-alpha-D-Man-(1-&gt;2)-alpha-D-Man-(1-&gt;3)-[alpha-D-Man-(1-&gt;3)-[alpha-D-Man-(1-&gt;2)-alpha-D-Man-(1-&gt;6)]-alpha-D-Man-(1-&gt;6)]-beta-D-Man-(1-&gt;4)-beta-D-GlcNAc-(1-&gt;4)-beta-D-GlcNAc)-L-asparaginyl-[protein] (N-glucan mannose isomer 8A1,2,3B1,3) + 3 H2O = N(4)-(alpha-D-Man-(1-&gt;3)-[alpha-D-Man-(1-&gt;3)-[alpha-D-Man-(1-&gt;6)]-alpha-D-Man-(1-&gt;6)]-beta-D-Man-(1-&gt;4)-beta-D-GlcNAc-(1-&gt;4)-beta-D-GlcNAc)-L-asparaginyl-[protein] (N-glucan mannose isomer 5A1,2) + 3 beta-D-mannose. Its pathway is protein modification; protein glycosylation. With respect to regulation, inhibited by both 1-deoxymannojirimycin and kifunensine. Functionally, involved in the maturation of Asn-linked oligosaccharides. Progressively trim alpha-1,2-linked mannose residues from Man(9)GlcNAc(2) to produce Man(5)GlcNAc(2). This Homo sapiens (Human) protein is Mannosyl-oligosaccharide 1,2-alpha-mannosidase IB (MAN1A2).